The chain runs to 392 residues: Chorismate synthase (392 aa).

NADP(+)-binding residues include Arg-40 and Arg-46. FMN contacts are provided by residues Arg-135–Ser-137, Gln-256–Ala-257, Gly-300, Lys-315–Thr-319, and Arg-341.

The protein belongs to the chorismate synthase family. As to quaternary structure, homotetramer. It depends on FMNH2 as a cofactor.

The enzyme catalyses 5-O-(1-carboxyvinyl)-3-phosphoshikimate = chorismate + phosphate. The protein operates within metabolic intermediate biosynthesis; chorismate biosynthesis; chorismate from D-erythrose 4-phosphate and phosphoenolpyruvate: step 7/7. Its function is as follows. Catalyzes the anti-1,4-elimination of the C-3 phosphate and the C-6 proR hydrogen from 5-enolpyruvylshikimate-3-phosphate (EPSP) to yield chorismate, which is the branch point compound that serves as the starting substrate for the three terminal pathways of aromatic amino acid biosynthesis. This reaction introduces a second double bond into the aromatic ring system. This is Chorismate synthase from Acidothermus cellulolyticus (strain ATCC 43068 / DSM 8971 / 11B).